The primary structure comprises 94 residues: Protein P19 (94 aa).

Binds to single-stranded DNA (ssDNA). This chain is Protein P19 (XIX), found in Acinetobacter calcoaceticus (Arthrobacter siderocapsulatus).